An 888-amino-acid polypeptide reads, in one-letter code: MSQGILSPPAGLLSDEEVVVSPMFESTAADLGSVIRKDLLSDCSVISTSLEDKQVPSEDGTEKVKVYLRVRPLLPSELERQEDQGCVCIENMETLALQAPKDSFAQKSNERGIGQATHRFTFSQIFGPEVGQASFFNLTVKEMVKDVLKGQNWLIYTYGVTNSGKTYTIQGTIKDGGILPRSLALIFNSLQGQLHPTPNLKPLFSNEVMWLDSKQIRQEELKKLALLNGGLQEEELSTSLKKSVYIDSRMGTSTSFDSGIAGLSSSSQFPSSSQLDEMSHRWAQPDTVPVSVPADLRFSIWISFFEIYNELLYDLLEPPSQQRKRQTLRLCEDQNGNPYVKDLNWIHVQDAEEAWKLLKVGRKNQSFASTHLNQNSSRSHSIFSIRILHLQGEGDIIPKISELSLCDLAGSERCKDQKSGERLKEAGNINTSLHTLGRCIAALRQNQQNRSKQNLVPFRDSKLTRVFQGFFTGRGRSCMIVNVNPCASTYDETLHVAKFSAIASQLVHAPPVQLGFPSIHSFLKEHSLRASPSLETGAKTDPGLGDDIENEVDISTYGKEELLQVVEAMKALLLKERQEKLRLEVQLRDEICNEMVEQMQQREQWCSEHLDTQKELLEELYEDKLTILKESLTSFYQEELQERDEKIKELEALLQEARQQQVAHQPSGSELSLRRSQRLTSVSTQQFHEIKAKLEQCKAELNSTTEELQKYQKMLEPPPSAKPFIVDVDKKLEEGQKNIRLLRTELQKLGESLQSAERACCHNTGAGKLRQALATCDDILIKQDQTLAELQNNMTLVKLDLRKKAACIAEQYHTVLKLQGQASTKKRLGANQENQQPNQQPPGKKPFLRNLLPRTPTCQSSTDCSPYARILRSRRSPLLKSGPFGKKY.

The residue at position 2 (serine 2) is an N-acetylserine. Phosphoserine occurs at positions 7, 14, and 21. The Kinesin motor domain occupies 63 to 506 (KVKVYLRVRP…AKFSAIASQL (444 aa)). An ATP-binding site is contributed by 159 to 166 (GVTNSGKT). A Phosphoserine; by PLK1 modification is found at serine 527. Residue serine 531 is modified to Phosphoserine. Coiled-coil stretches lie at residues 559 to 587 (KEELLQVVEAMKALLLKERQEKLRLEVQL) and 630 to 760 (ESLT…ERAC). Residues serine 667, serine 683, and serine 823 each carry the phosphoserine modification. Residues 761–888 (CHNTGAGKLR…LKSGPFGKKY (128 aa)) form a globular region. A disordered region spans residues 823–863 (STKKRLGANQENQQPNQQPPGKKPFLRNLLPRTPTCQSSTD). Threonine 855 is subject to Phosphothreonine. Phosphoserine occurs at positions 865, 876, and 881.

This sequence belongs to the TRAFAC class myosin-kinesin ATPase superfamily. Kinesin family. Phosphorylated by PLK1 at Ser-527 during mitosis, creating a docking site for PLK1 and recruiting PLK1 at central spindle.

The protein localises to the golgi apparatus. The protein resides in the cytoplasm. Its subcellular location is the cytoskeleton. It is found in the spindle. Mitotic kinesin required for chromosome passenger complex (CPC)-mediated cytokinesis. Following phosphorylation by PLK1, involved in recruitment of PLK1 to the central spindle. Interacts with guanosine triphosphate (GTP)-bound forms of RAB6A and RAB6B. May act as a motor required for the retrograde RAB6 regulated transport of Golgi membranes and associated vesicles along microtubules. Has a microtubule plus end-directed motility. In Bos taurus (Bovine), this protein is Kinesin-like protein KIF20A (KIF20A).